The sequence spans 366 residues: GTPase Obg (366 aa).

The 162-residue stretch at Met1–Leu162 folds into the Obg domain. The 173-residue stretch at Ala163–Asp335 folds into the OBG-type G domain. GTP contacts are provided by residues Gly169–Ser176, Phe194–Thr198, Asp218–Gly221, Asn288–Asp291, and Ser316–Met318. Ser176 and Thr196 together coordinate Mg(2+).

The protein belongs to the TRAFAC class OBG-HflX-like GTPase superfamily. OBG GTPase family. In terms of assembly, monomer. Mg(2+) is required as a cofactor.

It is found in the cytoplasm. Functionally, an essential GTPase which binds GTP, GDP and possibly (p)ppGpp with moderate affinity, with high nucleotide exchange rates and a fairly low GTP hydrolysis rate. Plays a role in control of the cell cycle, stress response, ribosome biogenesis and in those bacteria that undergo differentiation, in morphogenesis control. The sequence is that of GTPase Obg from Nitratidesulfovibrio vulgaris (strain ATCC 29579 / DSM 644 / CCUG 34227 / NCIMB 8303 / VKM B-1760 / Hildenborough) (Desulfovibrio vulgaris).